Here is a 472-residue protein sequence, read N- to C-terminus: MATKCGNCGPGYSTPLEAMKGPREEIVYLPCIYRNTGTEAPDYLATVDVDPKSPQYCQVIHRLPMPNLKDELHHSGWNTCSSCFGDSTKSRTKLVLPSLISSRIYVVDVGSEPRAPKLHKVIEPKDIHAKCELAFLHTSHCLASGEVMISSLGDVKGNGKGGFVLLDGETFEVKGTWERPGGAAPLGYDFWYQPRHNVMISTEWAAPNVLRDGFNPADVEAGLYGSHLYVWDWQRHEIVQTLSLKDGLIPLEIRFLHNPDAAQGFVGCALSSTIQRFYKNEGGTWSVEKVIQVPPKKVKGWLLPEMPGLITDILLSLDDRFLYFSNWLHGDLRQYDISDPQRPRLTGQLFLGGSIVKGGPVQVLEDEELKSQPEPLVVKGKRVAGGPQMIQLSLDGKRLYITTSLYSAWDKQFYPDLIREGSVMLQVDVDTVKGGLKLNPNFLVDFGKEPLGPALAHELRYPGGDCSSDIWI.

A2 is modified (N-acetylalanine). Residues S111, S371, and S467 each carry the phosphoserine modification.

It belongs to the selenium-binding protein family. In terms of assembly, interacts with USP33. Phosphorylated. Post-translationally, the N-terminus is blocked. In terms of tissue distribution, widely expressed. Highly expressed in liver, lung, colon, prostate, kidney and pancreas. In brain, present both in neurons and glia (at protein level). Down-regulated in lung adenocarcinoma, colorectal carcinoma and ovarian cancer. Two-fold up-regulated in brain and blood from schizophrenia patients.

The protein resides in the nucleus. The protein localises to the cytoplasm. Its subcellular location is the cytosol. It is found in the membrane. It carries out the reaction methanethiol + O2 + H2O = hydrogen sulfide + formaldehyde + H2O2 + H(+). The protein operates within organosulfur degradation. Catalyzes the oxidation of methanethiol, an organosulfur compound known to be produced in substantial amounts by gut bacteria. Selenium-binding protein which may be involved in the sensing of reactive xenobiotics in the cytoplasm. May be involved in intra-Golgi protein transport. The sequence is that of Methanethiol oxidase (SELENBP1) from Homo sapiens (Human).